The following is a 152-amino-acid chain: MAAFIAKQMVGDQLKSVKAMGGDEGEKEGNENAEEEAAAIEEARREAEERRKEKHRKMEEEREEMRQTIRDKYGLKKKVKEEPEAEADLDEGRVGRKKKTKEELAAEANEEEDDDEFAKFPTDLSDLTTKVSELPQKMAASVGEVTEKCSLQ.

The tract at residues 1-119 is disordered; the sequence is MAAFIAKQMV…EEEDDDEFAK (119 aa). The span at 23–39 shows a compositional bias: acidic residues; sequence DEGEKEGNENAEEEAAA. Composition is skewed to basic and acidic residues over residues 41 to 82 and 90 to 104; these read EEAR…VKEE and DEGR…KEEL. An interaction with the SNARE complex region spans residues 59–75; sequence EEEREEMRQTIRDKYGL. At Cys149 the chain carries Cysteine methyl ester. Residue Cys149 is the site of S-farnesyl cysteine attachment. Positions 150–152 are cleaved as a propeptide — removed in mature form; that stretch reads SLQ.

It belongs to the complexin/synaphin family. In terms of assembly, binds to the SNARE core complex containing SNAP25, synaptobrevin and syntaxin-1.

It is found in the membrane. The protein resides in the cytoplasm. Its subcellular location is the cytosol. In terms of biological role, positively regulates a late step in synaptic vesicle exocytosis. This chain is Complexin (cpx), found in Doryteuthis pealeii (Longfin inshore squid).